The following is a 212-amino-acid chain: Uracil phosphoribosyltransferase (212 aa).

5-phospho-alpha-D-ribose 1-diphosphate-binding positions include arginine 78, arginine 103, and 130 to 138 (DPMLATGGS). Residues isoleucine 193 and 198 to 200 (GDA) contribute to the uracil site. Aspartate 199 contacts 5-phospho-alpha-D-ribose 1-diphosphate.

The protein belongs to the UPRTase family. It depends on Mg(2+) as a cofactor.

It catalyses the reaction UMP + diphosphate = 5-phospho-alpha-D-ribose 1-diphosphate + uracil. Its pathway is pyrimidine metabolism; UMP biosynthesis via salvage pathway; UMP from uracil: step 1/1. Its activity is regulated as follows. Allosterically activated by GTP. Catalyzes the conversion of uracil and 5-phospho-alpha-D-ribose 1-diphosphate (PRPP) to UMP and diphosphate. This Azotobacter vinelandii (strain DJ / ATCC BAA-1303) protein is Uracil phosphoribosyltransferase.